Reading from the N-terminus, the 291-residue chain is Phosphatidylglycerol--prolipoprotein diacylglyceryl transferase (291 aa).

7 helical membrane-spanning segments follow: residues 21 to 41 (VALH…MWLA), 60 to 80 (LLYA…VLFY), 96 to 116 (WDGG…MIIF), 130 to 150 (FIAP…FING), 198 to 218 (SQLY…NLFI), 225 to 245 (GAVS…VEFF), and 260 to 280 (ISMG…MMVW). A 1,2-diacyl-sn-glycero-3-phospho-(1'-sn-glycerol) is bound at residue Arg-143.

Belongs to the Lgt family.

It localises to the cell inner membrane. It catalyses the reaction L-cysteinyl-[prolipoprotein] + a 1,2-diacyl-sn-glycero-3-phospho-(1'-sn-glycerol) = an S-1,2-diacyl-sn-glyceryl-L-cysteinyl-[prolipoprotein] + sn-glycerol 1-phosphate + H(+). It participates in protein modification; lipoprotein biosynthesis (diacylglyceryl transfer). Functionally, catalyzes the transfer of the diacylglyceryl group from phosphatidylglycerol to the sulfhydryl group of the N-terminal cysteine of a prolipoprotein, the first step in the formation of mature lipoproteins. In Salmonella choleraesuis (strain SC-B67), this protein is Phosphatidylglycerol--prolipoprotein diacylglyceryl transferase.